A 582-amino-acid chain; its full sequence is DNA primase (582 aa).

The CHC2-type zinc-finger motif lies at 40-64 (CPFHHEKTPSFTVSQKKQFYHCFGC). A Toprim domain is found at 259 to 341 (EMLLVVEGYM…GRQLKFVFLP (83 aa)). Mg(2+)-binding residues include glutamate 265, aspartate 309, and aspartate 311.

This sequence belongs to the DnaG primase family. As to quaternary structure, monomer. Interacts with DnaB. Zn(2+) serves as cofactor. It depends on Mg(2+) as a cofactor.

The catalysed reaction is ssDNA + n NTP = ssDNA/pppN(pN)n-1 hybrid + (n-1) diphosphate.. Its function is as follows. RNA polymerase that catalyzes the synthesis of short RNA molecules used as primers for DNA polymerase during DNA replication. This is DNA primase from Pasteurella multocida (strain Pm70).